Reading from the N-terminus, the 44-residue chain is Large ribosomal subunit protein bL34 (44 aa).

It belongs to the bacterial ribosomal protein bL34 family.

The sequence is that of Large ribosomal subunit protein bL34 from Neorickettsia sennetsu (strain ATCC VR-367 / Miyayama) (Ehrlichia sennetsu).